The chain runs to 177 residues: MKHTIKVIISEKELDIRVRELGEEITKKYKNSKNKIILIALLRGSFVFIADLCRRIKIEHEIDFMTTSSYGRGMISTGDVKIIKDLDEDIYNKNVLIVEDIIDSGKTLSKVLGILKLRNPKSLSICTLLDKPECREVNINIDFVGFSIPDEFMVGYGIDYAQSYRYLPYIGKVIFKK.

The diphosphate site is built by R43 and G44. Residue E99 participates in GMP binding. Position 99 (E99) interacts with IMP. Residues E99 and D100 each contribute to the Mg(2+) site. D103 functions as the Proton acceptor in the catalytic mechanism. Residues 103 to 108, K131, and D159 each bind GMP; that span reads DSGKTL. IMP contacts are provided by residues 103–108 and K131; that span reads DSGKTL. R165 is a binding site for diphosphate.

The protein belongs to the purine/pyrimidine phosphoribosyltransferase family. In terms of assembly, homotetramer. The cofactor is Mg(2+).

It localises to the cytoplasm. It carries out the reaction IMP + diphosphate = hypoxanthine + 5-phospho-alpha-D-ribose 1-diphosphate. It catalyses the reaction GMP + diphosphate = guanine + 5-phospho-alpha-D-ribose 1-diphosphate. It participates in purine metabolism; IMP biosynthesis via salvage pathway; IMP from hypoxanthine: step 1/1. Purine salvage pathway enzyme which catalyzes the transfer of the ribosyl-5-phosphate group from 5-phospho-alpha-D-ribose 1-diphosphate (PRPP) to the N9 position of hypoxanthine to yield IMP (inosine 5'-monophosphate). To a lesser extent, can also act on guanine leading to GMP, but shows a highly less efficient activity with xanthine. The sequence is that of Hypoxanthine phosphoribosyltransferase (hpt) from Buchnera aphidicola subsp. Schizaphis graminum (strain Sg).